Consider the following 420-residue polypeptide: UDP-glucuronic acid decarboxylase 1 (420 aa).

Met1 is modified (N-acetylmethionine). At 1–19 (MVSKALLRLVSAVNRRRMK) the chain is on the cytoplasmic side. The chain crosses the membrane as a helical; Signal-anchor for type II membrane protein span at residues 20–40 (LLLGIALLAYVASVWGNFVNM). The Lumenal segment spans residues 41-420 (RSIQENGELK…RIKKGRTRHS (380 aa)). The residue at position 94 (Thr94) is a Phosphothreonine. Gly98, Phe99, Val100, Asp119, Asn120, Phe122, Thr123, Gly124, Asp144, and Val145 together coordinate NAD(+). 2 residues coordinate UDP-alpha-D-glucuronate: Leu149 and Tyr150. Residues Leu159 and Ser161 each contribute to the NAD(+) site. Lys177 is a UDP-alpha-D-glucuronate binding site. Thr178 contacts NAD(+). 4 residues coordinate UDP-alpha-D-glucuronate: Asn185, Gly188, Lys191, and Arg192. Residues Ala200, Tyr231, and Lys235 each coordinate NAD(+). The active-site Proton acceptor is Tyr231. Residues Tyr245, Gln248, and Glu249 each coordinate UDP-alpha-D-glucuronate. NAD(+)-binding residues include Thr261, His267, and Arg272. N-linked (GlcNAc...) asparagine glycosylation occurs at Asn316.

It belongs to the NAD(P)-dependent epimerase/dehydratase family. UDP-glucuronic acid decarboxylase subfamily. In terms of assembly, homodimer and homotetramer. Interacts with AKT1. NAD(+) is required as a cofactor.

It is found in the golgi apparatus. The protein resides in the golgi stack membrane. The enzyme catalyses UDP-alpha-D-glucuronate + H(+) = UDP-alpha-D-xylose + CO2. The protein operates within nucleotide-sugar biosynthesis; UDP-alpha-D-xylose biosynthesis; UDP-alpha-D-xylose from UDP-alpha-D-glucuronate: step 1/1. Catalyzes the NAD-dependent decarboxylation of UDP-glucuronic acid to UDP-xylose. Necessary for the biosynthesis of the core tetrasaccharide in glycosaminoglycan biosynthesis. In Homo sapiens (Human), this protein is UDP-glucuronic acid decarboxylase 1.